The primary structure comprises 832 residues: MMELLSNNSVPQQMASSNAPSANNVAHSSTANGSGGGSVSSNASNSSERLLAGILESFPAWDLNVGLLPNVGQSSPPRADFFINNFLGGLDTHGDFSIGPIGSGARSNPKMSPESSNNSSISCGWCEVSASIRCLECNEFMCNDCLREHRNSPLSSNHSIVSLPTPIGASPTGGSSVNAQTPPSGNFICDIHNEMLRYVCDYCRKLVCQCCTLHEHKEHSYASIQSFMVGSKEKLEGAIESSQVGTRCIKSSIDKALAFIRLIERNCSELSDNIRKAFRQFIIAIEDRERFLLDFVEKLRQRRLAILHDQMAGLKSALAGLSETSDMLSKVADNACNMDQIEIAMKLTNGQRQMEQFAGIYKDLQPKQEVFAFAPPDYSLLQDIRNQGGVILVDDKNLPIVSSSNGIVPSVSSVNAVAAASVGVVGGVAGVVGGVGVSNGLDLAFGMNMPNNPLSVASSSVRRPLLRDNSFRIPSPIMQPRGGSACGMSSGMSSAALDWELNGLRSSPGLHFSAPRTTQAIPGCMDLVKVRNSNALSLSFATEGHEDGQVSRPWGLCVDKMGHVLVSDRRNNRVQVFNPDGSLKFKFGRKGVGNGEFDLPAGICVDVDNRIIVVDKDNHRVQIFTASGVFLLKFGSYGKEYGQFQYPWDVAVNSRRQIVVTDSRNHRIQQFDSEGRFIRQIVFDNHGQTKGIASPRGVCYTPTGNIIVSDFDNHCLYLIDPDINDILSVKGHEGSGFHEFNRPSGLCCDDEGRIIVADSKNQRILVFNQNLDFMWDIEVRPSINPLMPPTLDEKDRTCDVAIMPDGRIVFLIELSPDSKEGSNPYKRFVHVF.

Residues 1 to 14 (MMELLSNNSVPQQM) are compositionally biased toward polar residues. Residues 1-42 (MMELLSNNSVPQQMASSNAPSANNVAHSSTANGSGGGSVSSN) are disordered. Residues 15 to 32 (ASSNAPSANNVAHSSTAN) show a composition bias toward low complexity. Ser107 carries the post-translational modification Phosphoserine. 2 B box-type zinc fingers span residues 118-163 (NSSI…IVSL) and 184-224 (SGNF…YASI). Cys123, Cys126, Cys145, His149, Cys189, His192, Cys211, and His216 together coordinate Zn(2+). Residues Ser470, Ser475, and Ser506 each carry the phosphoserine modification. NHL repeat units lie at residues 537–580 (SLSF…FNPD), 584–627 (KFKF…FTAS), 631–674 (LLKF…FDSE), 680–722 (QIVF…IDPD), and 727–770 (LSVK…FNQN).

In terms of assembly, interacts with the head domain of rhea and the kinase domain of Ilk. Interacts with AGO1. Interacts with mei-P26. As to expression, expressed in ovarian germline stem cells (at protein level). Expressed ubiquitously in all epithelial cells during early stages of embryogenesis. Specifically expressed at epidermal muscle attachment site.

Vital for larval development. Plays a role in tumor formation. A crucial component for the physical link between integrins and the cytoskeleton in the epidermal muscle attachment sites. This is Protein wech (wech) from Drosophila melanogaster (Fruit fly).